The chain runs to 102 residues: Small ribosomal subunit protein uS10 (102 aa).

The protein belongs to the universal ribosomal protein uS10 family. Part of the 30S ribosomal subunit.

Functionally, involved in the binding of tRNA to the ribosomes. This Rhodospirillum rubrum (strain ATCC 11170 / ATH 1.1.1 / DSM 467 / LMG 4362 / NCIMB 8255 / S1) protein is Small ribosomal subunit protein uS10.